Consider the following 211-residue polypeptide: Large ribosomal subunit protein uL3 (211 aa).

Residues 116–142 (GTSGVMKKHGFSGNRASHGVSRNHRLG) are disordered.

The protein belongs to the universal ribosomal protein uL3 family. Part of the 50S ribosomal subunit. Forms a cluster with proteins L14 and L19.

In terms of biological role, one of the primary rRNA binding proteins, it binds directly near the 3'-end of the 23S rRNA, where it nucleates assembly of the 50S subunit. The chain is Large ribosomal subunit protein uL3 from Fusobacterium nucleatum subsp. nucleatum (strain ATCC 25586 / DSM 15643 / BCRC 10681 / CIP 101130 / JCM 8532 / KCTC 2640 / LMG 13131 / VPI 4355).